A 271-amino-acid chain; its full sequence is MVLTAVLLLLAACAGSAQGLGSFVHCEPCDEKALSMCPPSPLGCELVKEPGCGCCMTCALAEGQSCGVYTERCAQGLRCLPRQDEEKPLHALLHGRGVCLNEKSYREQAKIERDSREHEEPTTSEMAEETYSPKIFRPKHTRISELKAEAVKKDRRKKLTQSKFVGGAENTAHPRVISAPEMRQKSEQGPCRRHMEASLQELKASPRMVPRAVYLPNCDRKGFYKRKQCKPSRGRKRGICWCVDKYGMKLPGMEYVDGDFQCHTFDSSNVE.

The signal sequence occupies residues 1–19 (MVLTAVLLLLAACAGSAQG). Positions 22–102 (SFVHCEPCDE…LHGRGVCLNE (81 aa)) constitute an IGFBP N-terminal domain. 6 disulfides stabilise this stretch: Cys26–Cys52, Cys29–Cys54, Cys37–Cys55, Cys44–Cys58, Cys66–Cys79, and Cys73–Cys99. Residues 109–121 (AKIERDSREHEEP) show a composition bias toward basic and acidic residues. The interval 109-129 (AKIERDSREHEEPTTSEMAEE) is disordered. A Phosphoserine modification is found at Ser115. In terms of domain architecture, Thyroglobulin type-1 spans 188-262 (QGPCRRHMEA…MEYVDGDFQC (75 aa)). Cystine bridges form between Cys191–Cys218, Cys229–Cys240, and Cys242–Cys262.

In terms of assembly, interacts with IGF1; this interaction enhances the growth stimulatory effects of IGF1 on fibroblasts. Interacts with CAV1; this interaction allows trafficking of IGFBP5 from the plasma membrane to the nucleus. Interacts with NCL; this interaction is necessary for IGFBP5 localization to the nucleus.

It localises to the secreted. It is found in the cytoplasm. Its subcellular location is the nucleus. In terms of biological role, multifunctional protein that plays a critical role in regulating the availability of IGFs to their receptors and thereby regulates IGF-mediated cellular processes including proliferation, differentiation, and apoptosis in a cell-type specific manner. Increases the cell proliferation of osteoblasts, intestinal smooth muscle cells and neuroblastoma cells. Enhances adhesion and survival of epithelial cells but decreases adhesion of mesenchymal cells. Once secreted, acts as a major mediator of mTORC1-dependent feedback inhibition of IGF1 signaling. Also plays a role in the induction of extracellular matrix (ECM) production and deposition independently of its nuclear translocation and binding to IGFs. Acts itself as a growth factor that can act independently of IGFs to regulate bone formation. Acts as a ligand for the ROR1 receptor which triggers formation of ROR1/HER2 heterodimer to enhance CREB oncogenic signaling. This is Insulin-like growth factor-binding protein 5 (IGFBP5) from Bos taurus (Bovine).